The chain runs to 186 residues: Small ribosomal subunit protein uS5 (186 aa).

Residues 20-83 (FVDKLVHINR…EAAKRDMIFV (64 aa)) form the S5 DRBM domain.

It belongs to the universal ribosomal protein uS5 family. In terms of assembly, part of the 30S ribosomal subunit. Contacts proteins S4 and S8.

Functionally, with S4 and S12 plays an important role in translational accuracy. Located at the back of the 30S subunit body where it stabilizes the conformation of the head with respect to the body. The polypeptide is Small ribosomal subunit protein uS5 (Brucella abortus (strain S19)).